Here is a 98-residue protein sequence, read N- to C-terminus: MSLTYMNMFMAFTISLLGLLMYRAHMMSSLLCLEGMMLSLFVMMTMTILNTHLTLASMIPIILLVFAACEAALGLSLLVMVSTTYGMDYVQNLNLLQC.

3 consecutive transmembrane segments (helical) span residues 1 to 21 (MSLT…GLLM), 29 to 49 (SLLC…MTIL), and 61 to 81 (IILL…LVMV).

It belongs to the complex I subunit 4L family. Core subunit of respiratory chain NADH dehydrogenase (Complex I) which is composed of 45 different subunits.

The protein resides in the mitochondrion inner membrane. The catalysed reaction is a ubiquinone + NADH + 5 H(+)(in) = a ubiquinol + NAD(+) + 4 H(+)(out). Core subunit of the mitochondrial membrane respiratory chain NADH dehydrogenase (Complex I) which catalyzes electron transfer from NADH through the respiratory chain, using ubiquinone as an electron acceptor. Part of the enzyme membrane arm which is embedded in the lipid bilayer and involved in proton translocation. This chain is NADH-ubiquinone oxidoreductase chain 4L (MT-ND4L), found in Vampyressa brocki (Brock's yellow-eared bat).